Consider the following 407-residue polypeptide: RNA-binding motif, single-stranded-interacting protein 2 (407 aa).

At Met1 the chain carries N-acetylmethionine. Residues 29–54 form a disordered region; the sequence is QQMAPPSPSNSTPNSSSGSNGNDQLS. Positions 37-50 are enriched in low complexity; it reads SNSTPNSSSGSNGN. RRM domains lie at 56–129 and 135–220; these read TNLY…MAKQ and TNLY…FADG. At Ser106 the chain carries Phosphoserine. Thr269 is subject to Phosphothreonine. Phosphoserine occurs at positions 280 and 285.

Its subcellular location is the nucleus. The protein is RNA-binding motif, single-stranded-interacting protein 2 (RBMS2) of Homo sapiens (Human).